The chain runs to 222 residues: Formimidoylglutamase (222 aa).

6 residues coordinate Mn(2+): His34, Asp59, His61, Asp63, Asp150, and Asp152.

Belongs to the arginase family. Mn(2+) is required as a cofactor.

The catalysed reaction is N-formimidoyl-L-glutamate + H2O = formamide + L-glutamate. It functions in the pathway amino-acid degradation; L-histidine degradation into L-glutamate; L-glutamate from N-formimidoyl-L-glutamate (hydrolase route): step 1/1. Functionally, catalyzes the conversion of N-formimidoyl-L-glutamate to L-glutamate and formamide. The chain is Formimidoylglutamase (hutG) from Klebsiella aerogenes (Enterobacter aerogenes).